Reading from the N-terminus, the 1517-residue chain is DNA-directed RNA polymerase subunit beta' (1517 aa).

The Zn(2+) site is built by cysteine 71, cysteine 73, cysteine 86, and cysteine 89. Mg(2+) contacts are provided by aspartate 482, aspartate 484, and aspartate 486. Zn(2+) contacts are provided by cysteine 812, cysteine 886, cysteine 893, and cysteine 896.

Belongs to the RNA polymerase beta' chain family. In terms of assembly, the RNAP catalytic core consists of 2 alpha, 1 beta, 1 beta' and 1 omega subunit. When a sigma factor is associated with the core the holoenzyme is formed, which can initiate transcription. Mg(2+) serves as cofactor. It depends on Zn(2+) as a cofactor.

The catalysed reaction is RNA(n) + a ribonucleoside 5'-triphosphate = RNA(n+1) + diphosphate. DNA-dependent RNA polymerase catalyzes the transcription of DNA into RNA using the four ribonucleoside triphosphates as substrates. This chain is DNA-directed RNA polymerase subunit beta', found in Campylobacter jejuni subsp. jejuni serotype O:6 (strain 81116 / NCTC 11828).